The sequence spans 691 residues: Threonine--tRNA ligase (691 aa).

One can recognise a TGS domain in the interval 1-66; that stretch reads MSAPARPAPA…DADVDVIPVT (66 aa). The catalytic stretch occupies residues 265 to 571; sequence DHRKLGVELD…LTEHYAGAFP (307 aa). Zn(2+)-binding residues include C370, H421, and H548.

Belongs to the class-II aminoacyl-tRNA synthetase family. In terms of assembly, homodimer. Zn(2+) serves as cofactor.

The protein resides in the cytoplasm. The enzyme catalyses tRNA(Thr) + L-threonine + ATP = L-threonyl-tRNA(Thr) + AMP + diphosphate + H(+). In terms of biological role, catalyzes the attachment of threonine to tRNA(Thr) in a two-step reaction: L-threonine is first activated by ATP to form Thr-AMP and then transferred to the acceptor end of tRNA(Thr). Also edits incorrectly charged L-seryl-tRNA(Thr). This is Threonine--tRNA ligase from Mycolicibacterium vanbaalenii (strain DSM 7251 / JCM 13017 / BCRC 16820 / KCTC 9966 / NRRL B-24157 / PYR-1) (Mycobacterium vanbaalenii).